An 838-amino-acid polypeptide reads, in one-letter code: Ribonuclease Z (838 aa).

Phosphoserine is present on Ser824.

It belongs to the RNase Z family. Homodimer. It depends on Zn(2+) as a cofactor.

The protein localises to the cytoplasm. The protein resides in the nucleus. It carries out the reaction Endonucleolytic cleavage of RNA, removing extra 3' nucleotides from tRNA precursor, generating 3' termini of tRNAs. A 3'-hydroxy group is left at the tRNA terminus and a 5'-phosphoryl group is left at the trailer molecule.. Zinc phosphodiesterase, which displays some tRNA 3'-processing endonuclease activity. Probably involved in tRNA maturation, by removing a 3'-trailer from precursor tRNA. This chain is Ribonuclease Z (TRZ1), found in Saccharomyces cerevisiae (strain ATCC 204508 / S288c) (Baker's yeast).